Consider the following 160-residue polypeptide: Baculoviral IAP repeat-containing protein 5.1-A (160 aa).

One copy of the BIR repeat lies at 27–97; that stretch reads RLATFADWPF…KRSANCGFLS (71 aa). The residue at position 43 (T43) is a Phosphothreonine; by CDK1. Residues C66, C69, H86, and C93 each contribute to the Zn(2+) site.

The protein belongs to the IAP family. Component of the CPC at least composed of survivin/birc5, incenp, cdca8/borealin and/or cdca9/dasra-A, and aurkb/aurora-B. Interacts directly with incenp (via N-terminus), and may weakly interact with aurkb (via N-terminus) to stabilize the complex. Interacts with GTP-bound ran in both the S and M phases of the cell cycle. Also found in a complex with ubiquitin-mediated signaling proteins including at least usp9x/xFAM, nploc4/npl4 and ufd1. In terms of processing, ubiquitination is required for centrosome-targeting.

The protein resides in the cytoplasm. Its subcellular location is the nucleus. The protein localises to the chromosome. It localises to the centromere. It is found in the cytoskeleton. The protein resides in the spindle. Functionally, component of the chromosomal passenger complex (CPC), a complex that acts as a key regulator of mitosis. The CPC complex has essential functions at the centromere in ensuring correct chromosome alignment and segregation and is required for chromatin-induced microtubule stabilization and spindle assembly. Stimulates the mitotic kinase activity of aurkb/aurora-B in the CPC. Does not appear to exhibit anti-apoptotic activity. This Xenopus laevis (African clawed frog) protein is Baculoviral IAP repeat-containing protein 5.1-A (birc5.1-a).